We begin with the raw amino-acid sequence, 568 residues long: MSSSSIEDIKGKSHRLRGSLLESLANPTTGALHESDQTLIKYHGSYQQDDRDLREERRRQKLEPAYQFMIRTRTPGGVITPQQWLQLDAIATRYANHSLRVTTRQAFQFHGVIKRELKATMQAINAALIDTLAACGDVNRNVQVAANPLLSRAHADLYTDAAHLSEHLLPNTRAYYEIWLDEKKVAGAGEEEEPIYGPHYLPRKFKIGFAAPPINDVDVFANDLGFIAVIVDNTLLGYNVAIGGGMGTTHGDPDTWPRVGNIIGFITRADLIAISTAIVTTQRDFGNRTLRKRARFKYTIDDRGLDCIVGEIQQRAGITLQPARPFVFEHNGDRYGWIEGEDRHWHLTLSLPAGRIADTESSPLLSGFRAIAQLGIGQFRMTPNQNVVIAGISPGQRATIDALVTQYGLDTGNRAPTALARHAMACVALPTCGLAMAEAERYLPDFNVKLQPILEKYGLAEKPILLRISGCPNGCSRPYLAEIALVGKAPGRYNLMLGGDQRGQRLNTLYRENITETEILAALEPLLGRYQQKRLPGEGFGDFLHRTGIIALPPYPTHRHVISSTLQA.

[4Fe-4S] cluster-binding residues include cysteine 426, cysteine 432, cysteine 471, and cysteine 475. Cysteine 475 serves as a coordination point for siroheme.

The protein belongs to the nitrite and sulfite reductase 4Fe-4S domain family. In terms of assembly, alpha(8)-beta(8). The alpha component is a flavoprotein, the beta component is a hemoprotein. Siroheme is required as a cofactor. Requires [4Fe-4S] cluster as cofactor.

It carries out the reaction hydrogen sulfide + 3 NADP(+) + 3 H2O = sulfite + 3 NADPH + 4 H(+). Its pathway is sulfur metabolism; hydrogen sulfide biosynthesis; hydrogen sulfide from sulfite (NADPH route): step 1/1. Its function is as follows. Component of the sulfite reductase complex that catalyzes the 6-electron reduction of sulfite to sulfide. This is one of several activities required for the biosynthesis of L-cysteine from sulfate. This Xylella fastidiosa (strain 9a5c) protein is Sulfite reductase [NADPH] hemoprotein beta-component.